A 477-amino-acid chain; its full sequence is Serine/threonine protein phosphatase 2A 55 kDa regulatory subunit B' delta isoform (477 aa).

Belongs to the phosphatase 2A regulatory subunit B56 family. In terms of assembly, PP2A consists of a common heteromeric enzyme, composed of a catalytic subunit (subunits C), a constant regulatory subunit (subunit A), and a variety of regulatory subunits such as subunits B (the R2/B/PR55/B55, R3/B''/PR72/PR130/PR59 and R5/B'/B56 families). Interacts with SRK2E/OST1. As to expression, expressed ubiquitously.

It localises to the cytoplasm. Functionally, the B regulatory subunit may modulate substrate selectivity and catalytic activity, and may also direct the localization of the catalytic enzyme to a particular subcellular compartment. This Arabidopsis thaliana (Mouse-ear cress) protein is Serine/threonine protein phosphatase 2A 55 kDa regulatory subunit B' delta isoform (B'DELTA).